The sequence spans 200 residues: Bombinin-like peptides 3 (200 aa).

The or 18 signal peptide spans 1-16 (MNFKYIVAVSILIASA). A phenylalanine amide mark is found at Phe68 and Phe129.

It belongs to the bombinin family. As to expression, expressed by the skin glands.

The protein resides in the secreted. In terms of biological role, has antimicrobial activity, but no hemolytic activity. Preference on killing Gram-negative non-enteric bacteria. This chain is Bombinin-like peptides 3, found in Bombina orientalis (Oriental fire-bellied toad).